A 620-amino-acid polypeptide reads, in one-letter code: Probable indole-3-acetic acid-amido synthetase GH3.7 (620 aa).

This sequence belongs to the IAA-amido conjugating enzyme family. In terms of tissue distribution, ubiquitous.

In terms of biological role, may catalyze the synthesis of indole-3-acetic acid (IAA)-amino acid conjugates, providing a mechanism for the plant to cope with the presence of excess auxin. In Oryza sativa subsp. japonica (Rice), this protein is Probable indole-3-acetic acid-amido synthetase GH3.7 (GH3.7).